Reading from the N-terminus, the 347-residue chain is UDP-glucose 4-epimerase (347 aa).

Residues 11–13, 32–36, 65–66, Phe-87, and Lys-91 each bind NAD(+); these read GYI, DNFHN, and DI. 131-133 provides a ligand contact to substrate; it reads SAT. The active-site Proton acceptor is the Tyr-156. The NAD(+) site is built by Lys-160 and Tyr-184. Residues 184-186, 205-207, 223-225, Arg-238, and 299-302 each bind substrate; these read YFN, NNL, NVF, and REGD.

The protein belongs to the NAD(P)-dependent epimerase/dehydratase family. Homodimer. It depends on NAD(+) as a cofactor.

It catalyses the reaction UDP-alpha-D-glucose = UDP-alpha-D-galactose. It carries out the reaction UDP-N-acetyl-alpha-D-glucosamine = UDP-N-acetyl-alpha-D-galactosamine. Its pathway is carbohydrate metabolism; galactose metabolism. In terms of biological role, catalyzes two distinct but analogous reactions: the reversible epimerization of UDP-glucose to UDP-galactose and the reversible epimerization of UDP-N-acetylglucosamine to UDP-N-acetylgalactosamine. The reaction with UDP-Gal plays a critical role in the Leloir pathway of galactose catabolism in which galactose is converted to the glycolytic intermediate glucose 6-phosphate. It contributes to the catabolism of dietary galactose and enables the endogenous biosynthesis of both UDP-Gal and UDP-GalNAc when exogenous sources are limited. Both UDP-sugar interconversions are important in the synthesis of glycoproteins and glycolipids. The protein is UDP-glucose 4-epimerase (Gale) of Mus musculus (Mouse).